The following is a 160-amino-acid chain: Cyclic pyranopterin monophosphate synthase (160 aa).

Substrate-binding positions include 75-77 and 113-114; these read LCH and ME. The active site involves Asp-128.

It belongs to the MoaC family. As to quaternary structure, homohexamer; trimer of dimers.

It catalyses the reaction (8S)-3',8-cyclo-7,8-dihydroguanosine 5'-triphosphate = cyclic pyranopterin phosphate + diphosphate. It functions in the pathway cofactor biosynthesis; molybdopterin biosynthesis. Its function is as follows. Catalyzes the conversion of (8S)-3',8-cyclo-7,8-dihydroguanosine 5'-triphosphate to cyclic pyranopterin monophosphate (cPMP). In Ruthia magnifica subsp. Calyptogena magnifica, this protein is Cyclic pyranopterin monophosphate synthase.